A 96-amino-acid chain; its full sequence is Small, acid-soluble spore protein gamma-type (96 aa).

The span at 1 to 15 (MNTKNFTPQESRTNA) shows a compositional bias: polar residues. The tract at residues 1 to 96 (MNTKNFTPQE…SEAKKRNNQQ (96 aa)) is disordered. Residues 16–27 (QQVRQQNQQSAQ) are compositionally biased toward low complexity. A compositionally biased stretch (polar residues) spans 28–41 (GTSSGFATEFASET). 2 consecutive repeats follow at residues 28–52 (GTSS…QNQQ) and 61–87 (GATA…NQQS). 2 stretches are compositionally biased toward low complexity: residues 42–57 (NAQQ…AQAN) and 76–86 (NVQQVRQQNQQ).

It belongs to the gamma-type SASP family.

SASP are proteins degraded in the first minutes of spore germination and provide amino acids for both new protein synthesis and metabolism. These proteins may be involved in dormant spore's high resistance to UV light. The chain is Small, acid-soluble spore protein gamma-type from Laceyella sacchari (Thermoactinomyces thalpophilus).